A 135-amino-acid chain; its full sequence is Class I hydrophobin 2 (135 aa).

The N-terminal stretch at methionine 1–alanine 20 is a signal peptide. Intrachain disulfides connect cysteine 29–cysteine 114, cysteine 36–cysteine 107, cysteine 37–cysteine 73, and cysteine 115–cysteine 128. N-linked (GlcNAc...) asparagine glycans are attached at residues asparagine 117 and asparagine 132.

The protein belongs to the fungal hydrophobin family. As to quaternary structure, self-assembles to form functional amyloid fibrils called rodlets. Self-assembly into fibrillar rodlets occurs spontaneously at hydrophobic:hydrophilic interfaces and the rodlets further associate laterally to form amphipathic monolayers.

The protein localises to the secreted. It localises to the cell wall. In terms of biological role, aerial growth, conidiation, and dispersal of filamentous fungi in the environment rely upon a capability of their secreting small amphipathic proteins called hydrophobins (HPBs) with low sequence identity. Class I can self-assemble into an outermost layer of rodlet bundles on aerial cell surfaces, conferring cellular hydrophobicity that supports fungal growth, development and dispersal; whereas Class II form highly ordered films at water-air interfaces through intermolecular interactions but contribute nothing to the rodlet structure. The sequence is that of Class I hydrophobin 2 from Coprinopsis cinerea (strain Okayama-7 / 130 / ATCC MYA-4618 / FGSC 9003) (Inky cap fungus).